A 353-amino-acid chain; its full sequence is Phosphoribosylformylglycinamidine cyclo-ligase (353 aa).

It belongs to the AIR synthase family.

The protein resides in the cytoplasm. The enzyme catalyses 2-formamido-N(1)-(5-O-phospho-beta-D-ribosyl)acetamidine + ATP = 5-amino-1-(5-phospho-beta-D-ribosyl)imidazole + ADP + phosphate + H(+). It participates in purine metabolism; IMP biosynthesis via de novo pathway; 5-amino-1-(5-phospho-D-ribosyl)imidazole from N(2)-formyl-N(1)-(5-phospho-D-ribosyl)glycinamide: step 2/2. This Dinoroseobacter shibae (strain DSM 16493 / NCIMB 14021 / DFL 12) protein is Phosphoribosylformylglycinamidine cyclo-ligase.